The following is a 375-amino-acid chain: 23S rRNA (uracil(747)-C(5))-methyltransferase RlmC (375 aa).

The [4Fe-4S] cluster site is built by cysteine 3, cysteine 11, cysteine 14, and cysteine 87. S-adenosyl-L-methionine-binding residues include glutamine 212, phenylalanine 241, glutamate 262, and asparagine 307. Cysteine 334 acts as the Nucleophile in catalysis.

Belongs to the class I-like SAM-binding methyltransferase superfamily. RNA M5U methyltransferase family. RlmC subfamily.

It catalyses the reaction uridine(747) in 23S rRNA + S-adenosyl-L-methionine = 5-methyluridine(747) in 23S rRNA + S-adenosyl-L-homocysteine + H(+). Functionally, catalyzes the formation of 5-methyl-uridine at position 747 (m5U747) in 23S rRNA. This chain is 23S rRNA (uracil(747)-C(5))-methyltransferase RlmC, found in Salmonella paratyphi A (strain ATCC 9150 / SARB42).